The following is a 209-amino-acid chain: NAD(P)H-quinone oxidoreductase subunit K 2 (209 aa).

Cys53, Cys54, Cys118, and Cys149 together coordinate [4Fe-4S] cluster.

The protein belongs to the complex I 20 kDa subunit family. NDH-1 can be composed of about 15 different subunits; different subcomplexes with different compositions have been identified which probably have different functions. [4Fe-4S] cluster is required as a cofactor.

It is found in the cellular thylakoid membrane. It catalyses the reaction a plastoquinone + NADH + (n+1) H(+)(in) = a plastoquinol + NAD(+) + n H(+)(out). It carries out the reaction a plastoquinone + NADPH + (n+1) H(+)(in) = a plastoquinol + NADP(+) + n H(+)(out). Functionally, NDH-1 shuttles electrons from an unknown electron donor, via FMN and iron-sulfur (Fe-S) centers, to quinones in the respiratory and/or the photosynthetic chain. The immediate electron acceptor for the enzyme in this species is believed to be plastoquinone. Couples the redox reaction to proton translocation, and thus conserves the redox energy in a proton gradient. Cyanobacterial NDH-1 also plays a role in inorganic carbon-concentration. In Acaryochloris marina (strain MBIC 11017), this protein is NAD(P)H-quinone oxidoreductase subunit K 2.